The primary structure comprises 381 residues: Queuine tRNA-ribosyltransferase (381 aa).

Residue aspartate 103 is the Proton acceptor of the active site. Substrate contacts are provided by residues 103–107, aspartate 157, glutamine 200, and glycine 227; that span reads DSGGF. An RNA binding region spans residues 258-264; that stretch reads GVGTYRE. The active-site Nucleophile is the aspartate 277. The segment at 282–286 is RNA binding; important for wobble base 34 recognition; that stretch reads TRLAR. Residues cysteine 315, cysteine 317, cysteine 320, and histidine 346 each coordinate Zn(2+).

The protein belongs to the queuine tRNA-ribosyltransferase family. Homodimer. Within each dimer, one monomer is responsible for RNA recognition and catalysis, while the other monomer binds to the replacement base PreQ1. Requires Zn(2+) as cofactor.

The catalysed reaction is 7-aminomethyl-7-carbaguanine + guanosine(34) in tRNA = 7-aminomethyl-7-carbaguanosine(34) in tRNA + guanine. The protein operates within tRNA modification; tRNA-queuosine biosynthesis. Its function is as follows. Catalyzes the base-exchange of a guanine (G) residue with the queuine precursor 7-aminomethyl-7-deazaguanine (PreQ1) at position 34 (anticodon wobble position) in tRNAs with GU(N) anticodons (tRNA-Asp, -Asn, -His and -Tyr). Catalysis occurs through a double-displacement mechanism. The nucleophile active site attacks the C1' of nucleotide 34 to detach the guanine base from the RNA, forming a covalent enzyme-RNA intermediate. The proton acceptor active site deprotonates the incoming PreQ1, allowing a nucleophilic attack on the C1' of the ribose to form the product. After dissociation, two additional enzymatic reactions on the tRNA convert PreQ1 to queuine (Q), resulting in the hypermodified nucleoside queuosine (7-(((4,5-cis-dihydroxy-2-cyclopenten-1-yl)amino)methyl)-7-deazaguanosine). The protein is Queuine tRNA-ribosyltransferase of Cyanothece sp. (strain PCC 7425 / ATCC 29141).